Consider the following 907-residue polypeptide: Protein translocase subunit SecA (907 aa).

Residues Gln87, 105–109 (GEGKT), and Asp512 each bind ATP. Zn(2+)-binding residues include Cys891, Cys893, Cys902, and His903.

Belongs to the SecA family. As to quaternary structure, monomer and homodimer. Part of the essential Sec protein translocation apparatus which comprises SecA, SecYEG and auxiliary proteins SecDF-YajC and YidC. Requires Zn(2+) as cofactor.

The protein resides in the cell inner membrane. Its subcellular location is the cytoplasm. It carries out the reaction ATP + H2O + cellular proteinSide 1 = ADP + phosphate + cellular proteinSide 2.. Functionally, part of the Sec protein translocase complex. Interacts with the SecYEG preprotein conducting channel. Has a central role in coupling the hydrolysis of ATP to the transfer of proteins into and across the cell membrane, serving both as a receptor for the preprotein-SecB complex and as an ATP-driven molecular motor driving the stepwise translocation of polypeptide chains across the membrane. The protein is Protein translocase subunit SecA of Tolumonas auensis (strain DSM 9187 / NBRC 110442 / TA 4).